Reading from the N-terminus, the 171-residue chain is Shikimate kinase (171 aa).

Residue 13 to 18 participates in ATP binding; it reads GVGKST. Ser17 is a binding site for Mg(2+). Substrate-binding residues include Asp35, Arg59, and Gly81. Arg118 is a binding site for ATP. Arg136 provides a ligand contact to substrate. Arg153 is an ATP binding site.

Belongs to the shikimate kinase family. Monomer. Mg(2+) serves as cofactor.

It is found in the cytoplasm. It carries out the reaction shikimate + ATP = 3-phosphoshikimate + ADP + H(+). Its pathway is metabolic intermediate biosynthesis; chorismate biosynthesis; chorismate from D-erythrose 4-phosphate and phosphoenolpyruvate: step 5/7. Catalyzes the specific phosphorylation of the 3-hydroxyl group of shikimic acid using ATP as a cosubstrate. The protein is Shikimate kinase of Streptomyces avermitilis (strain ATCC 31267 / DSM 46492 / JCM 5070 / NBRC 14893 / NCIMB 12804 / NRRL 8165 / MA-4680).